Consider the following 373-residue polypeptide: tRNA-specific 2-thiouridylase MnmA (373 aa).

ATP is bound by residues 12-19 (GMSGGVDS) and M38. The tract at residues 98-100 (NPD) is interaction with target base in tRNA. The Nucleophile role is filled by C103. C103 and C200 are oxidised to a cystine. G127 is an ATP binding site. The interval 150 to 152 (KDQ) is interaction with tRNA. Residue C200 is the Cysteine persulfide intermediate of the active site. An interaction with tRNA region spans residues 312–313 (RY).

It belongs to the MnmA/TRMU family.

The protein resides in the cytoplasm. It carries out the reaction S-sulfanyl-L-cysteinyl-[protein] + uridine(34) in tRNA + AH2 + ATP = 2-thiouridine(34) in tRNA + L-cysteinyl-[protein] + A + AMP + diphosphate + H(+). Functionally, catalyzes the 2-thiolation of uridine at the wobble position (U34) of tRNA, leading to the formation of s(2)U34. The sequence is that of tRNA-specific 2-thiouridylase MnmA from Streptococcus pyogenes serotype M1.